Reading from the N-terminus, the 687-residue chain is Geranylgeranyl transferase type-2 subunit alpha 2 (687 aa).

PFTA repeat units follow at residues Y38–D72, I83–H117, Y132–T167, S168–A203, and T214–K248. LRR repeat units lie at residues M523–L545, L546–M567, Q568–H591, L592–Y616, and L646–S668.

The protein belongs to the protein prenyltransferase subunit alpha family. As to quaternary structure, heterotrimer composed of the alpha subunit RGTA, the beta subunit RGTB and REP; within this trimer, RGTA and RGTB form the catalytic component, while REP mediates peptide substrate binding.

It catalyses the reaction geranylgeranyl diphosphate + L-cysteinyl-[protein] = S-geranylgeranyl-L-cysteinyl-[protein] + diphosphate. The enzymatic reaction requires the aid of the Rab escort protein REP. In terms of biological role, catalyzes the transfer of a geranylgeranyl moiety from geranylgeranyl diphosphate to both cysteines of Rab proteins with the C-terminal sequence -CCXX, CXXX, -XCCX and -XCXC, such as RABA1A, RABA2A, RABF2A and RABG2. Does not seem to be a functional Rab-GGT alpha subunit in vitro. The sequence is that of Geranylgeranyl transferase type-2 subunit alpha 2 from Arabidopsis thaliana (Mouse-ear cress).